The following is a 107-amino-acid chain: U1-lycotoxin-Ls1g (107 aa).

The signal sequence occupies residues Met1–Ser20. A propeptide spanning residues Glu21–Arg41 is cleaved from the precursor. Disulfide bonds link Cys51/Cys68, Cys58/Cys86, and Cys70/Cys84.

This sequence belongs to the neurotoxin 19 (CSTX) family. 04 (U1-Lctx) subfamily. Expressed by the venom gland.

It is found in the secreted. The polypeptide is U1-lycotoxin-Ls1g (Lycosa singoriensis (Wolf spider)).